Consider the following 274-residue polypeptide: Large ribosomal subunit protein uL2 (274 aa).

The segment at valine 223–lysine 274 is disordered.

This sequence belongs to the universal ribosomal protein uL2 family. Part of the 50S ribosomal subunit. Forms a bridge to the 30S subunit in the 70S ribosome.

Functionally, one of the primary rRNA binding proteins. Required for association of the 30S and 50S subunits to form the 70S ribosome, for tRNA binding and peptide bond formation. It has been suggested to have peptidyltransferase activity; this is somewhat controversial. Makes several contacts with the 16S rRNA in the 70S ribosome. In Shewanella amazonensis (strain ATCC BAA-1098 / SB2B), this protein is Large ribosomal subunit protein uL2.